Reading from the N-terminus, the 448-residue chain is tRNA-2-methylthio-N(6)-dimethylallyladenosine synthase (448 aa).

Residues 2-119 enclose the MTTase N-terminal domain; sequence KKLYIKTFGC…LSDLIAKRRE (118 aa). [4Fe-4S] cluster is bound by residues Cys-11, Cys-48, Cys-82, Cys-156, Cys-160, and Cys-163. The Radical SAM core domain maps to 142-377; sequence RQTRGSAYVS…LVESQANQIS (236 aa). The TRAM domain occupies 378–444; the sequence is QKMLGNIERV…NYTLRGKLVE (67 aa).

This sequence belongs to the methylthiotransferase family. MiaB subfamily. Monomer. [4Fe-4S] cluster serves as cofactor.

It localises to the cytoplasm. The enzyme catalyses N(6)-dimethylallyladenosine(37) in tRNA + (sulfur carrier)-SH + AH2 + 2 S-adenosyl-L-methionine = 2-methylsulfanyl-N(6)-dimethylallyladenosine(37) in tRNA + (sulfur carrier)-H + 5'-deoxyadenosine + L-methionine + A + S-adenosyl-L-homocysteine + 2 H(+). Its function is as follows. Catalyzes the methylthiolation of N6-(dimethylallyl)adenosine (i(6)A), leading to the formation of 2-methylthio-N6-(dimethylallyl)adenosine (ms(2)i(6)A) at position 37 in tRNAs that read codons beginning with uridine. The polypeptide is tRNA-2-methylthio-N(6)-dimethylallyladenosine synthase (Polynucleobacter necessarius subsp. necessarius (strain STIR1)).